A 201-amino-acid polypeptide reads, in one-letter code: Small ribosomal subunit protein uS4 (201 aa).

Residues Arg93–Val156 enclose the S4 RNA-binding domain.

This sequence belongs to the universal ribosomal protein uS4 family. In terms of assembly, part of the 30S ribosomal subunit. Contacts protein S5. The interaction surface between S4 and S5 is involved in control of translational fidelity.

Its function is as follows. One of the primary rRNA binding proteins, it binds directly to 16S rRNA where it nucleates assembly of the body of the 30S subunit. In terms of biological role, with S5 and S12 plays an important role in translational accuracy. This Limosilactobacillus reuteri subsp. reuteri (strain JCM 1112) (Lactobacillus reuteri) protein is Small ribosomal subunit protein uS4.